The sequence spans 305 residues: Acetyl-coenzyme A carboxylase carboxyl transferase subunit beta (305 aa).

Residues 25-293 enclose the CoA carboxyltransferase N-terminal domain; that stretch reads LWVQCPACQQ…LPKVESVASL (269 aa). Cysteine 29, cysteine 32, cysteine 48, and cysteine 51 together coordinate Zn(2+). A C4-type zinc finger spans residues 29–51; that stretch reads CPACQQMIFARDLEKNQRVCTHC.

The protein belongs to the AccD/PCCB family. As to quaternary structure, acetyl-CoA carboxylase is a heterohexamer composed of biotin carboxyl carrier protein (AccB), biotin carboxylase (AccC) and two subunits each of ACCase subunit alpha (AccA) and ACCase subunit beta (AccD). It depends on Zn(2+) as a cofactor.

It localises to the cytoplasm. It catalyses the reaction N(6)-carboxybiotinyl-L-lysyl-[protein] + acetyl-CoA = N(6)-biotinyl-L-lysyl-[protein] + malonyl-CoA. It participates in lipid metabolism; malonyl-CoA biosynthesis; malonyl-CoA from acetyl-CoA: step 1/1. Functionally, component of the acetyl coenzyme A carboxylase (ACC) complex. Biotin carboxylase (BC) catalyzes the carboxylation of biotin on its carrier protein (BCCP) and then the CO(2) group is transferred by the transcarboxylase to acetyl-CoA to form malonyl-CoA. The chain is Acetyl-coenzyme A carboxylase carboxyl transferase subunit beta from Granulibacter bethesdensis (strain ATCC BAA-1260 / CGDNIH1).